A 378-amino-acid polypeptide reads, in one-letter code: Metacaspase-1B (378 aa).

The disordered stretch occupies residues 1-70 (MCSPPPYPPQ…QEAQSFGGGA (70 aa)). A compositionally biased stretch (low complexity) spans 10 to 29 (QGHHYPPSPHGSYYSPTPYG). Active-site residues include His169 and Cys225.

Belongs to the peptidase C14B family.

Involved in cell death (apoptosis). This is Metacaspase-1B (casB) from Aspergillus terreus (strain NIH 2624 / FGSC A1156).